The primary structure comprises 97 residues: MIKYHVSRSARLWAYWSTLPHRMLKKYPEQTIFYATFGVATLLIGGYKMKKYLTESDKPFYRGYYDVVRSNDPIAQNWRKPEEYPAPYLLSSVETAH.

This is an uncharacterized protein from Caenorhabditis elegans.